Consider the following 421-residue polypeptide: Tryptophan synthase beta chain (421 aa).

Lysine 112 is subject to N6-(pyridoxal phosphate)lysine.

The protein belongs to the TrpB family. In terms of assembly, tetramer of two alpha and two beta chains. The cofactor is pyridoxal 5'-phosphate.

It catalyses the reaction (1S,2R)-1-C-(indol-3-yl)glycerol 3-phosphate + L-serine = D-glyceraldehyde 3-phosphate + L-tryptophan + H2O. It functions in the pathway amino-acid biosynthesis; L-tryptophan biosynthesis; L-tryptophan from chorismate: step 5/5. Its function is as follows. The beta subunit is responsible for the synthesis of L-tryptophan from indole and L-serine. The protein is Tryptophan synthase beta chain (trpB) of Mycobacterium bovis (strain ATCC BAA-935 / AF2122/97).